We begin with the raw amino-acid sequence, 588 residues long: Proteasome-associated ATPase (588 aa).

A compositionally biased stretch (basic and acidic residues) spans 1–10 (MAAHDDDMNR). Positions 1-23 (MAAHDDDMNRGIRPGRGSDDPSG) are disordered. The stretch at 47 to 94 (RILEERIVELQTNLAGVSAQNERLANTLREARDQIVALKEEVDRLAQP) forms a coiled coil. 276 to 281 (GCGKTL) is a binding site for ATP. The tract at residues 587-588 (YL) is docks into pockets in the proteasome alpha-ring.

Belongs to the AAA ATPase family. As to quaternary structure, homohexamer. Assembles into a hexameric ring structure that caps the 20S proteasome core. Strongly interacts with the prokaryotic ubiquitin-like protein Pup through a hydrophobic interface; the interacting region of ARC lies in its N-terminal coiled-coil domain. There is one Pup binding site per ARC hexamer ring. Upon ATP-binding, the C-terminus of ARC interacts with the alpha-rings of the proteasome core, possibly by binding to the intersubunit pockets.

It participates in protein degradation; proteasomal Pup-dependent pathway. Its function is as follows. ATPase which is responsible for recognizing, binding, unfolding and translocation of pupylated proteins into the bacterial 20S proteasome core particle. May be essential for opening the gate of the 20S proteasome via an interaction with its C-terminus, thereby allowing substrate entry and access to the site of proteolysis. Thus, the C-termini of the proteasomal ATPase may function like a 'key in a lock' to induce gate opening and therefore regulate proteolysis. In Streptomyces scabiei (strain 87.22), this protein is Proteasome-associated ATPase.